The chain runs to 506 residues: ATP synthase subunit alpha, plastid (506 aa).

Residue 170 to 177 (GDRQTGKT) participates in ATP binding.

This sequence belongs to the ATPase alpha/beta chains family. As to quaternary structure, F-type ATPases have 2 components, CF(1) - the catalytic core - and CF(0) - the membrane proton channel. CF(1) has five subunits: alpha(3), beta(3), gamma(1), delta(1), epsilon(1). CF(0) has four main subunits: a, b, b' and c.

The protein localises to the plastid membrane. It catalyses the reaction ATP + H2O + 4 H(+)(in) = ADP + phosphate + 5 H(+)(out). Produces ATP from ADP in the presence of a proton gradient across the membrane. The alpha chain is a regulatory subunit. The polypeptide is ATP synthase subunit alpha, plastid (Prototheca wickerhamii).